The primary structure comprises 310 residues: Vomeronasal type-1 receptor 47 (310 aa).

Over 1 to 16 (MNENSRLHTHSNIRNT) the chain is Extracellular. A helical membrane pass occupies residues 17 to 37 (FFSEIGIGISGNSFLLLFHII). Over 38 to 49 (KFFRGHRPRLTD) the chain is Cytoplasmic. Residues 50-70 (LPIGLLSLIHLLMLLVAAVIA) traverse the membrane as a helical segment. The Extracellular segment spans residues 71-91 (TDIFISWRGWNDIICKFLVYL). A disulfide bridge links cysteine 85 with cysteine 172. Residues 92-114 (YRSLRGLSLCTTSMLSVLQAIIL) form a helical membrane-spanning segment. The Cytoplasmic segment spans residues 115–131 (SPRSYCLAKFKRKSSHN). The helical transmembrane segment at 132–152 (ISCAIIFLSVLYMSISSHLFI) threads the bilayer. Residues 153–193 (SITATLNLTMNNFLYVSQSCSLLPLSYLMQSMYSTLLVLRE) are Extracellular-facing. A glycan (N-linked (GlcNAc...) asparagine) is linked at asparagine 159. A helical transmembrane segment spans residues 194-214 (VFLIGLMVLSTSYMVALLCMH). The Cytoplasmic portion of the chain corresponds to 215–238 (RKQAQNLQGTSLSLKTAPEQRATQ). A helical membrane pass occupies residues 239–259 (TILMLMTFFVLMSIFDSIVSS). The Extracellular portion of the chain corresponds to 260–269 (SRAMFLDDST). Residues 270 to 290 (CYSIYIFVMHIYATVSPFVFM) form a helical membrane-spanning segment. At 291–310 (STEKHLVNFFRSMCEWIINM) the chain is on the cytoplasmic side.

It belongs to the G-protein coupled receptor 1 family.

The protein localises to the cell membrane. Functionally, putative pheromone receptor implicated in the regulation of social and reproductive behavior. The sequence is that of Vomeronasal type-1 receptor 47 (Vmn1r47) from Mus musculus (Mouse).